The following is a 289-amino-acid chain: Glycerol facilitator-aquaporin gla (289 aa).

2 helical membrane passes run 10-30 (ITEFVGTALLIIMGNGAVANV) and 41-61 (SWMIIGWGYGLGVMLPAVAFG). Positions 68 to 70 (NPA) match the NPA 1 motif. 3 helical membrane passes run 87-107 (AQYIIAQVLGAMFGQLLIVMV), 151-171 (FLGSFVLFFGAVAATNIFFGS), and 209-229 (MIAHLFLGFLVMGLVVALGGP). Positions 235–237 (NPA) match the NPA 2 motif. The helical transmembrane segment at 264 to 284 (WYAWVPVLAPILASLAAVALF) threads the bilayer.

It belongs to the MIP/aquaporin (TC 1.A.8) family.

The protein localises to the cell membrane. Mixed channel protein that transports both water and glycerol. The polypeptide is Glycerol facilitator-aquaporin gla (gla) (Lactococcus lactis subsp. cremoris (Streptococcus cremoris)).